The chain runs to 81 residues: Protease inhibitor 1 (81 aa).

A signal peptide spans 1 to 24 (MSSGGLLLLLGLLTLWAELTPVSG). In terms of domain architecture, BPTI/Kunitz inhibitor spans 29-79 (CELPAETGPCKARIRAFYYNPHSHKCLEFTYGGCKGNANNFKTIDECNRTC). Intrachain disulfides connect Cys-29–Cys-79, Cys-38–Cys-62, and Cys-54–Cys-75.

As to expression, expressed by the venom gland.

It localises to the secreted. In terms of biological role, snake venom serine protease inhibitor. The chain is Protease inhibitor 1 from Walterinnesia aegyptia (Desert black snake).